Reading from the N-terminus, the 259-residue chain is Protein GrpE (259 aa).

2 disordered regions span residues 1-75 (MNSD…KGSD) and 227-259 (GPGP…KDEN). Positions 20–40 (NNPSENFVSSSNSNESVNQVE) are enriched in low complexity. Residues 46–60 (EVEHQVKNDSVDTAK) show a composition bias toward basic and acidic residues. The segment covering 61-73 (EQSSTSCESNIKG) has biased composition (polar residues).

Belongs to the GrpE family. In terms of assembly, homodimer.

The protein localises to the cytoplasm. Functionally, participates actively in the response to hyperosmotic and heat shock by preventing the aggregation of stress-denatured proteins, in association with DnaK and GrpE. It is the nucleotide exchange factor for DnaK and may function as a thermosensor. Unfolded proteins bind initially to DnaJ; upon interaction with the DnaJ-bound protein, DnaK hydrolyzes its bound ATP, resulting in the formation of a stable complex. GrpE releases ADP from DnaK; ATP binding to DnaK triggers the release of the substrate protein, thus completing the reaction cycle. Several rounds of ATP-dependent interactions between DnaJ, DnaK and GrpE are required for fully efficient folding. This chain is Protein GrpE, found in Prochlorococcus marinus (strain NATL1A).